A 722-amino-acid chain; its full sequence is PAB1-binding protein 1 (722 aa).

Residues 1–10 show a composition bias toward basic and acidic residues; sequence MKGNFRKRDS. The segment at 1-38 is disordered; the sequence is MKGNFRKRDSSTNSRKGGNSDSNYTNGGVPNQNNSSMF. The segment covering 11-38 has biased composition (polar residues); it reads STNSRKGGNSDSNYTNGGVPNQNNSSMF. A Sm domain is found at 51 to 107; the sequence is RQDYLLANSIGSDVTVTVTSGVKYTGLLVSCNLESTNGIDVVLRFPRVADSGVSDSV. S106 is modified (phosphoserine). T193 bears the Phosphothreonine mark. S215 is modified (phosphoserine). Disordered stretches follow at residues 305-380, 412-488, and 683-722; these read ALKS…LSSK, SSTL…NPHT, and GSGPSGMPANGSAMHSHGHSRNYHQTSHHGHHNSSTSGHK. Low complexity-rich tracts occupy residues 307-316, 338-347, 356-370, and 412-421; these read KSNSKPNSNK, SSSNSNKNEN, PAAAGAPEGKPPQKT, and SSTLKSNSSL. K344 participates in a covalent cross-link: Glycyl lysine isopeptide (Lys-Gly) (interchain with G-Cter in ubiquitin). A compositionally biased stretch (polar residues) spans 429 to 455; that stretch reads TPSAKTVSPTTQISAGKSESRRSGSNI. S436 is subject to Phosphoserine. Over residues 456 to 471 the composition is skewed to low complexity; sequence SQGQSSTGHTTRSSTS. Positions 698–722 are enriched in basic residues; the sequence is SHGHSRNYHQTSHHGHHNSSTSGHK.

The protein belongs to the ataxin-2 family. As to quaternary structure, interacts (via C-terminus) with MKT1 (via C-terminus). Interacts with FIR1, IGO1, LSM12, PBP4 and PAB1.

It is found in the cytoplasm. The protein localises to the nucleus. It localises to the mitochondrion. Involved in pre-mRNA polyadenylation. May act to repress the ability of PAB1 to negatively regulate polyadenylation. Negative regulator of poly(A) nuclease (PAN) activity. Promotes mating-type switching in mother cells by positively regulating HO mRNA translation. Localizes MKT1 to polysomes. This Saccharomyces cerevisiae (strain ATCC 204508 / S288c) (Baker's yeast) protein is PAB1-binding protein 1 (PBP1).